The sequence spans 463 residues: MSYMIAVPDMLSSAAGDLASIGSSINASTRAAAAATTRLLPAAADEVSAHIAALFSGHGEGYQAIARQMAAFHDQFTLALTSSAGAYASAEATNVEQQVLGLINAPTQALLGRPLIGNGADGTAANPNGGAGGLLYGNGGNGFSQTTAGLTGGTGGSAGLIGNGGNGGAGGAGANGGAGGNGGWLYGSGGNGGAGGAGPAGAIGAPGVAGGAGGAGGTAGLFGNGGAGGAGGAGGAGGRGGDGGSAGWLSGNGGDAGTGGGGGNAGNGGNGGSAGWLSGNGGTGGGGGTAGAGGQGGNGNSGIDPGNGGQGADTGNAGNGGHGGSAAKLFGDGGAGGAGGMGSTGGTGGGGGFGGGTGGNGGNGHAGGAGGSGGTAGLLGSGGSGGTGGDGGNGGLGAGSGAKGNGGNGGDGGKGGDAQLIGNGGNGGNGGKGGTGLMPGINGTGGAGGSRGQISGNPGTPGQ.

The PE domain occupies 1 to 93; it reads MSYMIAVPDM…AGAYASAEAT (93 aa). Disordered stretches follow at residues 231 to 320 and 408 to 463; these read GGAG…AGNG and NGGD…TPGQ. Residues 408 to 451 show a composition bias toward gly residues; it reads NGGDGGKGGDAQLIGNGGNGGNGGKGGTGLMPGINGTGGAGGSR.

Belongs to the mycobacterial PE family. PGRS subfamily.

This is an uncharacterized protein from Mycobacterium tuberculosis (strain ATCC 25618 / H37Rv).